Reading from the N-terminus, the 168-residue chain is S-ribosylhomocysteine lyase (168 aa).

The Fe cation site is built by histidine 54, histidine 58, and cysteine 128.

This sequence belongs to the LuxS family. As to quaternary structure, homodimer. Fe cation is required as a cofactor.

It carries out the reaction S-(5-deoxy-D-ribos-5-yl)-L-homocysteine = (S)-4,5-dihydroxypentane-2,3-dione + L-homocysteine. Its function is as follows. Involved in the synthesis of autoinducer 2 (AI-2) which is secreted by bacteria and is used to communicate both the cell density and the metabolic potential of the environment. The regulation of gene expression in response to changes in cell density is called quorum sensing. Catalyzes the transformation of S-ribosylhomocysteine (RHC) to homocysteine (HC) and 4,5-dihydroxy-2,3-pentadione (DPD). This is S-ribosylhomocysteine lyase from Mannheimia succiniciproducens (strain KCTC 0769BP / MBEL55E).